The following is a 170-amino-acid chain: Large ribosomal subunit protein bL17 (170 aa).

The segment covering alanine 124–alanine 134 has biased composition (low complexity). The disordered stretch occupies residues alanine 124 to asparagine 170. 2 stretches are compositionally biased toward basic and acidic residues: residues proline 135–alanine 148 and proline 156–asparagine 170.

It belongs to the bacterial ribosomal protein bL17 family. In terms of assembly, part of the 50S ribosomal subunit. Contacts protein L32.

In Desulfovibrio desulfuricans (strain ATCC 27774 / DSM 6949 / MB), this protein is Large ribosomal subunit protein bL17.